The primary structure comprises 229 residues: MASTFSQSVFARSLYEDSAENKVDSSKNTEANFPITLPKVLPTDPKASSLHKPQEQQPNIIPSKEEDKKPVINSMKLPSIPAPGTDNINESHIPRGYWKHPAVDKIAKRLHDQAPSDRTWSRMVSNLFAFISIQFLNRYLPNTTAVKVVSWILQALLLFNLLESVWQFVRPQPTFDDLQLTPLQRKLMGLPEGGSTSGKHLTPPRYRPNFSPSRKAENVKSPVRSTTWA.

2 disordered regions span residues 16–68 (EDSA…EEDK) and 189–229 (GLPE…TTWA).

It localises to the endoplasmic reticulum. Has a role in meiosis. This Schizosaccharomyces pombe (strain 972 / ATCC 24843) (Fission yeast) protein is Meiotically up-regulated gene 31 protein (mug31).